The primary structure comprises 584 residues: Complement component C8 alpha chain (584 aa).

Residues 1–20 (MFAVVFFILSLMTCQPGVTA) form the signal peptide. Positions 21–30 (QEKVNQRVRR) are excised as a propeptide. In terms of domain architecture, TSP type-1 1 spans 38–91 (TCQLSNWSEWTDCFPCQDKKYRHRSLLQPNKFGGTICSGDIWDQASCSSSTTCV). 7 disulfide bridges follow: cysteine 39–cysteine 74, cysteine 50–cysteine 84, cysteine 53–cysteine 90, cysteine 96–cysteine 108, cysteine 102–cysteine 121, cysteine 115–cysteine 130, and cysteine 140–cysteine 177. Tryptophan 44 carries C-linked (Man) tryptophan glycosylation. The LDL-receptor class A domain occupies 94–132 (AQCGQDFQCKETGRCLKRHLVCNGDQDCLDGSDEDDCED). Residues leucine 113, asparagine 116, aspartate 118, aspartate 120, aspartate 126, and glutamate 127 each coordinate Ca(2+). Residues 135 to 498 (AIDEDCSQYE…QYLMEFNACR (364 aa)) form the MACPF domain. The next 4 membrane-spanning stretches (beta stranded) occupy residues 248–256 (FGVTIGIGP), 259–266 (SPLLVGVG), 377–384 (GGSLGIQY), and 390–395 (VGGGLS). A disulfide bond links cysteine 375 and cysteine 399. Asparagine 437 carries N-linked (GlcNAc...) asparagine glycosylation. Disulfide bonds link cysteine 497-cysteine 544, cysteine 499-cysteine 515, cysteine 502-cysteine 517, and cysteine 519-cysteine 528. An EGF-like domain is found at 499–529 (CGPCFNNGVPILEGTSCRCQCRLGSLGAACE). A TSP type-1 2 domain is found at 539 to 583 (DGSWSCWSSWSVCRAGIQERRRECDNPAPQNGGASCPGRKVQTQA). Residues tryptophan 542, tryptophan 545, and tryptophan 548 are each glycosylated (C-linked (Man) tryptophan). Intrachain disulfides connect cysteine 551–cysteine 584 and cysteine 562–cysteine 574. The disordered stretch occupies residues 562–584 (CDNPAPQNGGASCPGRKVQTQAC).

Belongs to the complement C6/C7/C8/C9 family. Heterotrimer of 3 chains: alpha (C8A), beta (C8B) and gamma (C8G); the alpha and gamma chains are disulfide bonded. Component of the membrane attack complex (MAC), composed of complement C5b, C6, C7, C8A, C8B, C8G and multiple copies of the pore-forming subunit C9.

The protein localises to the secreted. Its subcellular location is the target cell membrane. With respect to regulation, membrane attack complex (MAC) assembly is inhibited by CD59, thereby protecting self-cells from damage during complement activation. CD59 acts by binding to the beta-haipins of C8 (C8A and C8B), forming an intermolecular beta-sheet that prevents incorporation of the multiple copies of C9 required for complete formation of the osmolytic pore. MAC assembly is also inhibited by clusterin (CLU) chaperones that inhibit polymerization of C9. Its function is as follows. Component of the membrane attack complex (MAC), a multiprotein complex activated by the complement cascade, which inserts into a target cell membrane and forms a pore, leading to target cell membrane rupture and cell lysis. The MAC is initiated by proteolytic cleavage of C5 into complement C5b in response to the classical, alternative, lectin and GZMK complement pathways. The complement pathways consist in a cascade of proteins that leads to phagocytosis and breakdown of pathogens and signaling that strengthens the adaptive immune system. C8A, together with C8B and C8G, inserts into the target membrane, but does not form pores by itself. During MAC assembly, associates with C5b, C6 and C7 to form the C5b8 intermediate complex that inserts into the target membrane and traverses the bilayer increasing membrane rigidity. This Homo sapiens (Human) protein is Complement component C8 alpha chain.